We begin with the raw amino-acid sequence, 122 residues long: Large ribosomal subunit protein bL12 (122 aa).

It belongs to the bacterial ribosomal protein bL12 family. Homodimer. Part of the ribosomal stalk of the 50S ribosomal subunit. Forms a multimeric L10(L12)X complex, where L10 forms an elongated spine to which 2 to 4 L12 dimers bind in a sequential fashion. Binds GTP-bound translation factors.

In terms of biological role, forms part of the ribosomal stalk which helps the ribosome interact with GTP-bound translation factors. Is thus essential for accurate translation. In Yersinia enterocolitica serotype O:8 / biotype 1B (strain NCTC 13174 / 8081), this protein is Large ribosomal subunit protein bL12.